The primary structure comprises 173 residues: Putative metal-dependent hydrolase BCE_2729 (173 aa).

Residues His-65, His-156, and His-160 each coordinate Zn(2+).

This sequence belongs to the metal hydrolase YfiT family. Homodimer. Zn(2+) is required as a cofactor.

The protein resides in the cytoplasm. Its function is as follows. Possible metal-dependent hydrolase. The chain is Putative metal-dependent hydrolase BCE_2729 from Bacillus cereus (strain ATCC 10987 / NRS 248).